The chain runs to 65 residues: Toxin NaTx-22 (65 aa).

Positions 1 to 64 constitute an LCN-type CS-alpha/beta domain; the sequence is KDGYPVIKTT…TYPIPGKTCK (64 aa). 4 cysteine pairs are disulfide-bonded: C12–C63, C16–C39, C25–C44, and C29–C46.

The protein belongs to the long (4 C-C) scorpion toxin superfamily. Sodium channel inhibitor family. As to expression, expressed by the venom gland.

The protein localises to the secreted. In terms of biological role, probable sodium channel inhibitor. The protein is Toxin NaTx-22 of Centruroides sculpturatus (Arizona bark scorpion).